The following is a 1607-amino-acid chain: Putative molluscan insulin-related peptide(s) receptor (1607 aa).

The signal sequence occupies residues Met-1 to Ala-35. N-linked (GlcNAc...) asparagine glycosylation is found at Asn-82, Asn-188, Asn-245, Asn-275, Asn-332, Asn-343, Asn-495, Asn-520, Asn-663, Asn-710, Asn-778, Asn-796, Asn-802, Asn-868, Asn-879, Asn-940, and Asn-953. 3 consecutive Fibronectin type-III domains span residues His-517–Phe-632, Glu-636–Glu-726, and Leu-756–Ser-861. Over Glu-698 to Thr-975 the chain is Extracellular. The 98-residue stretch at Thr-870–Pro-967 folds into the Fibronectin type-III 4 domain. Residues Leu-976 to Ala-996 form a helical membrane-spanning segment. The Cytoplasmic portion of the chain corresponds to Cys-997–Leu-1607. In terms of domain architecture, Protein kinase spans Ile-1037 to Leu-1308. ATP is bound by residues Leu-1043–Val-1051 and Lys-1072. The Proton acceptor role is filled by Asp-1173. The residue at position 1199 (Tyr-1199) is a Phosphotyrosine; by autocatalysis. Disordered stretches follow at residues Gly-1328 to Glu-1352 and Thr-1501 to Trp-1539. Residues Asn-1503 to Glu-1515 are compositionally biased toward polar residues. Residues Ser-1524–Ser-1538 show a composition bias toward low complexity.

The protein belongs to the protein kinase superfamily. Tyr protein kinase family. Insulin receptor subfamily. Probable tetramer of 2 alpha and 2 beta chains linked by disulfide bonds. The alpha chains contribute to the formation of the ligand-binding domain, while the beta chains carry the kinase domain. It depends on Mn(2+) as a cofactor.

The protein resides in the membrane. The enzyme catalyses L-tyrosyl-[protein] + ATP = O-phospho-L-tyrosyl-[protein] + ADP + H(+). In terms of biological role, this receptor probably binds to the four different molluscan insulin-related peptides and has a tyrosine-protein kinase activity. In Lymnaea stagnalis (Great pond snail), this protein is Putative molluscan insulin-related peptide(s) receptor.